Reading from the N-terminus, the 209-residue chain is Ribosomal RNA large subunit methyltransferase E (209 aa).

S-adenosyl-L-methionine-binding residues include Gly63, Trp65, Asp83, Asp99, and Asp124. Lys164 (proton acceptor) is an active-site residue.

It belongs to the class I-like SAM-binding methyltransferase superfamily. RNA methyltransferase RlmE family.

It is found in the cytoplasm. It carries out the reaction uridine(2552) in 23S rRNA + S-adenosyl-L-methionine = 2'-O-methyluridine(2552) in 23S rRNA + S-adenosyl-L-homocysteine + H(+). Specifically methylates the uridine in position 2552 of 23S rRNA at the 2'-O position of the ribose in the fully assembled 50S ribosomal subunit. The protein is Ribosomal RNA large subunit methyltransferase E of Baumannia cicadellinicola subsp. Homalodisca coagulata.